The primary structure comprises 2843 residues: Adenomatous polyposis coli protein (2843 aa).

At Ala2 the chain carries N-acetylalanine. Positions 2 to 61 form a coiled coil; sequence AAASYDQLLKQVEALKMENSNLRQELEDNSNHLTKLETEASNMKEVLKQLQGSIEDEAMA. Residues Ser107 and Ser111 each carry the phosphoserine modification. The stretch at 127–248 forms a coiled coil; it reads SRESTGYLEE…ATEAERSSQN (122 aa). Residues 239-305 form a disordered region; the sequence is ATEAERSSQN…STHSAPRRLT (67 aa). The segment covering 241–261 has biased composition (basic and acidic residues); sequence EAERSSQNKHETGSHDAERQN. Positions 271–282 are enriched in polar residues; it reads MATSGNGQGSTT. Positions 290–299 are enriched in low complexity; that stretch reads SVLSSSSTHS. ARM repeat units follow at residues 453–495, 505–547, 548–591, 592–638, 639–683, 684–725, and 726–767; these read LMKL…HYSI, LTNL…IASV, LRNL…VLSA, LWNL…GGGI, LRNV…ACGT, LWNL…SAAA, and LRNL…LDAQ. Phosphoserine is present on residues Ser744, Ser748, and Ser780. Residues 828 to 878 are disordered; sequence TTVLPSSSSSRGSLDSSRSEKDRSLERERGIGLGNYHPATENPGTSSKRGL. The segment covering 833 to 843 has biased composition (low complexity); the sequence is SSSSSRGSLDS. Basic and acidic residues predominate over residues 844 to 857; sequence SRSEKDRSLERERG. Positions 869–878 are enriched in polar residues; sequence NPGTSSKRGL. Ser908 bears the Phosphoserine mark. Disordered stretches follow at residues 923-943 and 958-987; these read RRSS…SENS and RSSN…ESYS. Positions 927 to 943 are enriched in polar residues; sequence AAHTHSNTYNFTKSENS. The tract at residues 960-1337 is responsible for down-regulation through a process mediated by direct ubiquitination; that stretch reads SNDSLNSVSS…QHPRTKSSRL (378 aa). Residues 961–971 show a composition bias toward low complexity; sequence NDSLNSVSSSD. Phosphoserine is present on residues Ser987, Ser1038, and Ser1042. The segment at 1020–1169 is interaction with catenins; the sequence is ELDTPINYSL…TNYSIKYNEE (150 aa). Disordered stretches follow at residues 1099–1169, 1190–1244, and 1311–1376; these read VSPY…YNEE, SQKQ…GQPQ, and IGTR…PEHY. Residues 1107 to 1130 show a composition bias toward polar residues; the sequence is ANGSETNRVGSNHGINQNVSQSLC. Over residues 1146-1159 the composition is skewed to basic and acidic residues; the sequence is RYSEEEQHEEEERP. Positions 1190 to 1224 are enriched in low complexity; that stretch reads SQKQSFSFSKSSSGQSSKTEHMSSSSENTSTPSSN. Positions 1225–1244 are enriched in polar residues; it reads AKRQNQLHPSSAQSRSGQPQ. Low complexity-rich tracts occupy residues 1335 to 1345 and 1355 to 1366; these read SRLQGSSLSSE and SSGAKSPSKSGA. A phosphoserine mark is found at Ser1360, Ser1371, Ser1385, Ser1392, and Ser1395. Disordered stretches follow at residues 1403-1475, 1526-1569, 1583-1611, 1664-1717, and 1729-1836; these read SSVQ…VNAA, PPVQ…DSDD, MPTK…KPSQ, SPPN…DDNK, and NSAM…RVRG. Thr1438 carries the post-translational modification Phosphothreonine. 2 stretches are compositionally biased toward basic and acidic residues: residues 1448–1466 and 1540–1564; these read TKRE…RESG and EQPK…KDLL. Position 1567 is a phosphoserine (Ser1567). Residues 1683 to 1698 show a composition bias toward basic and acidic residues; that stretch reads EFEKRDTIPTEGRSTD. A compositionally biased stretch (basic residues) spans 1735–1744; it reads GKSHKPFRVK. Residue Ser1774 is modified to Phosphoserine. Basic and acidic residues-rich tracts occupy residues 1785–1794 and 1804–1813; these read YRTRVRKNAD and VFSDNKDSKK. 3 positions are modified to phosphoserine: Ser1861, Ser1863, and Ser1864. The segment at 1866-1893 is highly charged; that stretch reads DFDDDDVDLSREKAELRKAKENKESEAK. Residues 1881 to 1896 show a composition bias toward basic and acidic residues; that stretch reads LRKAKENKESEAKVTS. Disordered regions lie at residues 1881–1950, 1965–2011, and 2043–2072; these read LRKA…TDEK, HNSS…APKS, and ISSA…GGIL. 2 stretches are compositionally biased toward polar residues: residues 1897 to 1913 and 1928 to 1938; these read HTEL…TQAI and QKQSTFPQSSK. Residues 1939-1950 are compositionally biased toward basic and acidic residues; that stretch reads DIPDRGAATDEK. Phosphoserine occurs at positions 1971 and 1973. Residues 1979–1991 show a composition bias toward basic and acidic residues; sequence NNNKENEPIKETE. Residues 2035–2059 form an interaction with AXIN1 region; it reads EDDLLQECISSAMPKKKKPSRLKGD. Residues Ser2088, Ser2093, Ser2125, Ser2129, Ser2130, and Ser2132 each carry the phosphoserine modification. Disordered stretches follow at residues 2147–2635 and 2667–2714; these read PFHL…SGAT and NNPR…VPMR. A Phosphothreonine modification is found at Thr2151. The basic region stretch occupies residues 2167–2674; it reads ILKPGEKSTL…PINNPRSGRS (508 aa). Residues 2169–2187 are compositionally biased toward basic and acidic residues; the sequence is KPGEKSTLETKKIESESKG. Composition is skewed to polar residues over residues 2203–2223 and 2257–2271; these read VRSN…NMPS and ASKS…TTSP. Phosphoserine is present on residues Ser2260, Ser2270, and Ser2283. The segment covering 2286 to 2331 has biased composition (polar residues); sequence ARQTSQIGGSSKAPSRSGSRDSTPSRPAQQPLSRPIQSPGRNSISP. The span at 2348 to 2369 shows a compositional bias: low complexity; the sequence is TSSPSTASTKSSGSGKMSYTSP. Polar residues-rich tracts occupy residues 2370-2409 and 2418-2427; these read GRQM…NGNG and RMSSTKSSGS. Over residues 2459–2477 the composition is skewed to low complexity; it reads SASFESLSPSSRPASPTRS. A phosphoserine mark is found at Ser2473 and Ser2535. An interaction with DLG1 region spans residues 2475-2843; that stretch reads TRSQAQTPVL…HSGSYLVTSV (369 aa). Positions 2518 to 2535 are enriched in basic and acidic residues; sequence NDGRPAKRHDIARSHSES. The span at 2555-2568 shows a compositional bias: polar residues; the sequence is SSSLPRVSTWRRTG. Ser2569 is subject to Phosphoserine. Over residues 2569 to 2579 the composition is skewed to low complexity; it reads SSSSILSASSE. Residues 2580 to 2592 are compositionally biased toward basic and acidic residues; the sequence is SSEKAKSEDEKHV. Polar residues-rich tracts occupy residues 2593 to 2608, 2620 to 2635, and 2668 to 2679; these read NSIS…QVSA, FSPT…SGAT, and NPRSGRSPTGNT. Phosphoserine occurs at positions 2671 and 2674. Positions 2674-2843 are interaction with MAPRE1; sequence SPTGNTPPVI…HSGSYLVTSV (170 aa). Thr2679 is modified (phosphothreonine). 2 positions are modified to phosphoserine: Ser2710 and Ser2724. The tract at residues 2729 to 2843 is disordered; it reads DAPDQKGTEI…HSGSYLVTSV (115 aa). Over residues 2741-2757 the composition is skewed to polar residues; sequence GQNNPVPVSETNESSIV. Low complexity predominate over residues 2763-2774; the sequence is SSSSSSKHSSPS. The segment covering 2784–2812 has biased composition (polar residues); the sequence is FNYNPSPRKSSADSTSARPSQIPTPVNNN. At Ser2789 the chain carries Phosphoserine. A Microtubule tip localization signal motif is present at residues 2803-2806; sequence SQIP. The PDZ-binding motif lies at 2841–2843; that stretch reads TSV.

The protein belongs to the adenomatous polyposis coli (APC) family. In terms of assembly, forms homooligomers. Found in a complex consisting of ARHGEF4, APC and CTNNB1. Found in a complex composed of MACF1, APC, AXIN1, CTNNB1 and GSK3B. The complex composed, at least, of APC, CTNNB1 and GSK3B interacts with JPT1; the interaction requires the inactive form of GSK3B (phosphorylated at 'Ser-9'). Interacts with APC2. Interacts with DLG1 (via PDZ domains) and DLG3 (via PDZ domains). Interacts with alpha- and beta-catenins. Interacts with AXIN1 (via RGS domain). Interacts with ARHGEF4 (via N-terminus). Interacts (via C-terminal residues 2674-2843) with MAPRE1 (via C-terminal residues 206-211); the interaction inhibits association with and bundling of F-actin. Interacts with MAPRE2 and MAPRE3 (via C-terminus). Interacts with DIAPH1; DIAPH1 acts as a scaffold protein for MAPRE1 and APC to stabilize microtubules and promote cell migration. Interacts with DIAPH2. Interacts with SCRIB; may mediate APC targeting to adherens junctions of epithelial cells. Interacts with SPATA13 (via N-terminus and SH3 domain). Interacts with ASAP1 (via SH3 domain). Interacts (at the cell membrane) with AMER1 and AMER2 (via ARM repeats). Interacts with KHDRBS1. Interacts with actin; binds both to F-actin and actin filament bundles. In terms of processing, phosphorylated; phosphorylation enhances the F-actin bundling activity. Phosphorylated by GSK3B. Ubiquitinated, leading to its degradation by the proteasome. Ubiquitination is facilitated by Axin. Deubiquitinated by ZRANB1/TRABID. As to expression, expressed in a variety of tissues: brain, small intestine, colon, thymus, skeletal muscle, heart, prostate, lung, spleen, ovary, testis kidney, placenta, blood and liver. Isoform 1A: Very strongly expressed in brain but has relatively low expression levels in other tissues. Isoform 1B: Predominant form in all tissues except for brain, including gastric mucosa and blood.

The protein resides in the cell junction. The protein localises to the adherens junction. It is found in the cytoplasm. Its subcellular location is the cytoskeleton. It localises to the cell projection. The protein resides in the lamellipodium. The protein localises to the ruffle membrane. It is found in the cell membrane. Tumor suppressor. Promotes rapid degradation of CTNNB1 and participates in Wnt signaling as a negative regulator. APC activity is correlated with its phosphorylation state. Activates the GEF activity of SPATA13 and ARHGEF4. Plays a role in hepatocyte growth factor (HGF)-induced cell migration. Required for MMP9 up-regulation via the JNK signaling pathway in colorectal tumor cells. Associates with both microtubules and actin filaments, components of the cytoskeleton. Plays a role in mediating the organization of F-actin into ordered bundles. Functions downstream of Rho GTPases and DIAPH1 to selectively stabilize microtubules. Acts as a mediator of ERBB2-dependent stabilization of microtubules at the cell cortex. It is required for the localization of MACF1 to the cell membrane and this localization of MACF1 is critical for its function in microtubule stabilization. The polypeptide is Adenomatous polyposis coli protein (Homo sapiens (Human)).